Consider the following 72-residue polypeptide: Large ribosomal subunit protein bL28 (72 aa).

The protein belongs to the bacterial ribosomal protein bL28 family.

This chain is Large ribosomal subunit protein bL28, found in Chlorobaculum tepidum (strain ATCC 49652 / DSM 12025 / NBRC 103806 / TLS) (Chlorobium tepidum).